We begin with the raw amino-acid sequence, 266 residues long: 4-hydroxy-tetrahydrodipicolinate reductase (266 aa).

Residues 8–13 (GAAGRM) and E33 each bind NAD(+). R34 lines the NADP(+) pocket. NAD(+)-binding positions include 97 to 99 (GST) and 121 to 124 (APNM). Catalysis depends on H154, which acts as the Proton donor/acceptor. H155 contributes to the (S)-2,3,4,5-tetrahydrodipicolinate binding site. The active-site Proton donor is the K158. 164-165 (GT) is a binding site for (S)-2,3,4,5-tetrahydrodipicolinate.

The protein belongs to the DapB family.

It localises to the cytoplasm. The enzyme catalyses (S)-2,3,4,5-tetrahydrodipicolinate + NAD(+) + H2O = (2S,4S)-4-hydroxy-2,3,4,5-tetrahydrodipicolinate + NADH + H(+). It carries out the reaction (S)-2,3,4,5-tetrahydrodipicolinate + NADP(+) + H2O = (2S,4S)-4-hydroxy-2,3,4,5-tetrahydrodipicolinate + NADPH + H(+). It functions in the pathway amino-acid biosynthesis; L-lysine biosynthesis via DAP pathway; (S)-tetrahydrodipicolinate from L-aspartate: step 4/4. Catalyzes the conversion of 4-hydroxy-tetrahydrodipicolinate (HTPA) to tetrahydrodipicolinate. In Trichlorobacter lovleyi (strain ATCC BAA-1151 / DSM 17278 / SZ) (Geobacter lovleyi), this protein is 4-hydroxy-tetrahydrodipicolinate reductase.